We begin with the raw amino-acid sequence, 1377 residues long: Neogenin (1377 aa).

The first 2 residues, 1–2, serve as a signal peptide directing secretion; it reads AA. Residues 3–1074 lie on the Extracellular side of the membrane; sequence AKNGSPPQSA…PTSPLDSNML (1072 aa). Ig-like C2-type domains lie at 21 to 114, 121 to 206, 198 to 305, and 310 to 395; these read PLYF…RTAK, PRFT…EAEL, PKFS…AELT, and PEFL…AQLI. Asn42 carries an N-linked (GlcNAc...) asparagine glycan. 3 disulfides stabilise this stretch: Cys43–Cys98, Cys142–Cys190, and Cys239–Cys289. N-linked (GlcNAc...) asparagine glycosylation occurs at Asn179. A glycan (N-linked (GlcNAc...) asparagine) is linked at Asn295. Cys331 and Cys379 are joined by a disulfide. Fibronectin type-III domains follow at residues 410–504, 510–600, 605–700, 710–800, 825–924, and 926–1023; these read APRD…TQPE, PAPN…TLSD, APQN…TFES, VPSS…RPHT, PPVG…LVPT, and PPKD…TPKA. N-linked (GlcNAc...) asparagine glycans are attached at residues Asn439 and Asn458. Residues Asn608 and Asn684 are each glycosylated (N-linked (GlcNAc...) asparagine). The N-linked (GlcNAc...) asparagine glycan is linked to Asn878. Residues 1010 to 1066 are disordered; that stretch reads GPMSEAVQFRTPKADSSDKMPNDQALGSAGKGGRLPDLGSDYKPPMSGSNSPHGSPT. Basic and acidic residues predominate over residues 1021 to 1030; the sequence is PKADSSDKMP. Positions 1056–1066 are enriched in polar residues; it reads SGSNSPHGSPT. The helical transmembrane segment at 1075–1095 threads the bilayer; that stretch reads LVIIVSIGVITIVVVVIIAVF. The Cytoplasmic portion of the chain corresponds to 1096-1377; it reads CTRRTTSHQK…MKDLNAITTA (282 aa). The disordered stretch occupies residues 1143–1281; it reads PIDKSPDPNP…SHPLKSFAVP (139 aa). Residues Ser1147 and Ser1163 each carry the phosphoserine modification. Composition is skewed to polar residues over residues 1160 to 1176, 1213 to 1238, and 1246 to 1265; these read PRNSQDITPVDNSMDSN, QPPQQSVRNTPSTDTMPASSSQTCCT, and ATSSSYLASSQEEDSGQSLP. A Phosphothreonine modification is found at Thr1167. Phosphoserine is present on Ser1317. Position 1320 is a phosphothreonine (Thr1320). Residues Ser1348, Ser1350, and Ser1351 each carry the phosphoserine modification.

This sequence belongs to the immunoglobulin superfamily. DCC family. In terms of assembly, interacts with MYO10. Interacts with RGMA and RGMB. Interacts with BMP2, BMP4, BMP6, and BMP7.

Its subcellular location is the cell membrane. In terms of biological role, multi-functional cell surface receptor regulating cell adhesion in many diverse developmental processes, including neural tube and mammary gland formation, myogenesis and angiogenesis. Receptor for members of the BMP, netrin, and repulsive guidance molecule (RGM) families. Netrin-Neogenin interactions result in a chemoattractive axon guidance response and cell-cell adhesion, the interaction between NEO1/Neogenin and RGMa and RGMb induces a chemorepulsive response. The polypeptide is Neogenin (Neo1) (Rattus norvegicus (Rat)).